Here is an 891-residue protein sequence, read N- to C-terminus: Inter-alpha-trypsin inhibitor heavy chain H3 (891 aa).

A signal peptide spans 1–20; the sequence is MALAQWPYLILALLSGLAVS. Residues 21-34 constitute a propeptide that is removed on maturation; that stretch reads GFPRNPSLLLGKRS. The region spanning 29–158 is the VIT domain; the sequence is LLGKRSLPGR…KVTFELTYEE (130 aa). N-linked (GlcNAc...) asparagine glycosylation is present at N91. Positions 284 to 467 constitute a VWFA domain; that stretch reads SVVFVIDVSG…LQLQGFYEEV (184 aa). D651 is modified (aspartate 1-(chondroitin 4-sulfate)-ester). Residues 652–891 constitute a propeptide that is removed on maturation; that stretch reads PHFIIQIPEK…HRDYIVPNLF (240 aa).

The protein belongs to the ITIH family. As to quaternary structure, I-alpha-I plasma protease inhibitors are assembled from one or two heavy chains (H1, H2 or H3) and one light chain, bikunin. Inter-alpha-inhibitor (I-alpha-I) is composed of H1, H2 and bikunin, inter-alpha-like inhibitor (I-alpha-LI) of H2 and bikunin, and pre-alpha-inhibitor (P-alpha-I) of H3 and bikunin.

The protein resides in the secreted. May act as a carrier of hyaluronan in serum or as a binding protein between hyaluronan and other matrix protein, including those on cell surfaces in tissues to regulate the localization, synthesis and degradation of hyaluronan which are essential to cells undergoing biological processes. This is Inter-alpha-trypsin inhibitor heavy chain H3 (ITIH3) from Bos taurus (Bovine).